Reading from the N-terminus, the 508-residue chain is Photosystem II CP47 reaction center protein (508 aa).

A run of 6 helical transmembrane segments spans residues 21-36 (SVHIMHTALVAGWAGS), 101-115 (IVFSGLCFLAAIWHW), 140-156 (GIHLFLSGVACFGFGAF), 203-218 (IAAGTLGILAGLFHLS), 237-252 (VLSSSIAAVFFAAFVV), and 457-472 (SFALLFFFGHIWHGAR).

This sequence belongs to the PsbB/PsbC family. PsbB subfamily. PSII is composed of 1 copy each of membrane proteins PsbA, PsbB, PsbC, PsbD, PsbE, PsbF, PsbH, PsbI, PsbJ, PsbK, PsbL, PsbM, PsbT, PsbX, PsbY, PsbZ, Psb30/Ycf12, at least 3 peripheral proteins of the oxygen-evolving complex and a large number of cofactors. It forms dimeric complexes. It depends on Binds multiple chlorophylls. PSII binds additional chlorophylls, carotenoids and specific lipids. as a cofactor.

It localises to the plastid. The protein localises to the chloroplast thylakoid membrane. Its function is as follows. One of the components of the core complex of photosystem II (PSII). It binds chlorophyll and helps catalyze the primary light-induced photochemical processes of PSII. PSII is a light-driven water:plastoquinone oxidoreductase, using light energy to abstract electrons from H(2)O, generating O(2) and a proton gradient subsequently used for ATP formation. The polypeptide is Photosystem II CP47 reaction center protein (Lemna minor (Common duckweed)).